Here is an 876-residue protein sequence, read N- to C-terminus: Valine--tRNA ligase (876 aa).

The 'HIGH' region motif lies at 44-54 (PNVTGKLHLGH). Positions 520 to 524 (KMSKS) match the 'KMSKS' region motif. K523 lines the ATP pocket. The stretch at 806–876 (EGLIDMDKEI…VKLRINQLKA (71 aa)) forms a coiled coil.

The protein belongs to the class-I aminoacyl-tRNA synthetase family. ValS type 1 subfamily. As to quaternary structure, monomer.

The protein localises to the cytoplasm. It carries out the reaction tRNA(Val) + L-valine + ATP = L-valyl-tRNA(Val) + AMP + diphosphate. Catalyzes the attachment of valine to tRNA(Val). As ValRS can inadvertently accommodate and process structurally similar amino acids such as threonine, to avoid such errors, it has a 'posttransfer' editing activity that hydrolyzes mischarged Thr-tRNA(Val) in a tRNA-dependent manner. In Staphylococcus saprophyticus subsp. saprophyticus (strain ATCC 15305 / DSM 20229 / NCIMB 8711 / NCTC 7292 / S-41), this protein is Valine--tRNA ligase.